Here is an 834-residue protein sequence, read N- to C-terminus: DNA gyrase subunit A (834 aa).

The region spanning 53–520 (LPDVRDGLKP…NDTEIDEEDL (468 aa)) is the Topo IIA-type catalytic domain. Catalysis depends on Tyr-141, which acts as the O-(5'-phospho-DNA)-tyrosine intermediate. A GyrA-box motif is present at residues 547–553 (QGRGGVG).

Belongs to the type II topoisomerase GyrA/ParC subunit family. As to quaternary structure, heterotetramer, composed of two GyrA and two GyrB chains. In the heterotetramer, GyrA contains the active site tyrosine that forms a transient covalent intermediate with DNA, while GyrB binds cofactors and catalyzes ATP hydrolysis.

The protein resides in the cytoplasm. The catalysed reaction is ATP-dependent breakage, passage and rejoining of double-stranded DNA.. Functionally, a type II topoisomerase that negatively supercoils closed circular double-stranded (ds) DNA in an ATP-dependent manner to modulate DNA topology and maintain chromosomes in an underwound state. Negative supercoiling favors strand separation, and DNA replication, transcription, recombination and repair, all of which involve strand separation. Also able to catalyze the interconversion of other topological isomers of dsDNA rings, including catenanes and knotted rings. Type II topoisomerases break and join 2 DNA strands simultaneously in an ATP-dependent manner. This is DNA gyrase subunit A from Brachyspira hyodysenteriae (strain ATCC 49526 / WA1).